The chain runs to 251 residues: 16S rRNA (guanine(1405)-N(7))-methyltransferase (251 aa).

S-adenosyl-L-methionine is bound by residues Tyr56, 81-83 (HAS), Arg87, Ala111, Asp131, 157-158 (DV), Phe173, and Glu182.

This sequence belongs to the methyltransferase superfamily. Aminoglycoside resistance family.

It carries out the reaction guanosine(1405) in 16S rRNA + S-adenosyl-L-methionine = N(7)-methylguanosine(1405) in 16S rRNA + S-adenosyl-L-homocysteine. Specifically methylates the N(7) position of guanine 1405 in 16S rRNA. Confers resistance to various aminoglycosides, including kanamycin, tobramycin, amikacin, arbekacin, gentamicin, sisomicin and isepamicin. The chain is 16S rRNA (guanine(1405)-N(7))-methyltransferase (rmtB) from Serratia marcescens.